A 418-amino-acid chain; its full sequence is Tektin-1 (418 aa).

Coiled-coil stretches lie at residues 21–84, 268–308, and 336–383; these read KNQY…LEQL, LKET…DQEG, and RLIK…ENTI. Positions 399-418 are disordered; that stretch reads PRDGDDHGEWAGGSHPEAVC.

This sequence belongs to the tektin family. Microtubule inner protein component of sperm flagellar doublet microtubules. Post-translationally, ubiquitinated, leading to its degradation. Deubiquitinated by USP16, promoting its stability. In terms of tissue distribution, expressed in trachea multiciliated cells.

It localises to the cytoplasm. It is found in the cytoskeleton. The protein localises to the cilium axoneme. The protein resides in the flagellum axoneme. In terms of biological role, microtubule inner protein (MIP) part of the dynein-decorated doublet microtubules (DMTs) in cilia and flagellar axoneme. Forms filamentous polymers in the walls of ciliary and flagellar microtubules. In Bos taurus (Bovine), this protein is Tektin-1 (TEKT1).